The sequence spans 802 residues: Ribosomal protein S6 kinase alpha-5 (802 aa).

The span at 1-22 (MEEEGGSSGGAAGTSADGGDGG) shows a compositional bias: gly residues. Residues 1–23 (MEEEGGSSGGAAGTSADGGDGGE) form a disordered region. Residues 49-318 (FELLKVLGTG…ADEIKEHLFF (270 aa)) form the Protein kinase 1 domain. ATP contacts are provided by residues 55–63 (LGTGAYGKV) and Lys-81. The active-site Proton acceptor is Asp-177. Ser-212 carries the post-translational modification Phosphoserine; by autocatalysis. Positions 319 to 387 (QKINWDDLAA…VAPSILFKRN (69 aa)) constitute an AGC-kinase C-terminal domain. Ser-360 carries the post-translational modification Phosphoserine; by MAPK1, MAPK3 and MAPK14. A phosphoserine; by autocatalysis mark is found at Ser-376 and Ser-381. The Protein kinase 2 domain occupies 426 to 687 (DLKDKPLGEG…MSGLRYNEWL (262 aa)). ATP is bound by residues 432–440 (LGEGSFSIC) and Lys-455. The active-site Proton acceptor is Asp-544. Thr-581 is modified (phosphothreonine; by MAPK1, MAPK3 and MAPK14). Phosphoserine is present on residues Ser-647, Ser-657, Ser-691, and Ser-695. Phosphothreonine; by MAPK1, MAPK3 and MAPK14 is present on Thr-700. The interval 741 to 802 (AKRRKMKKTS…TLFQFSDSVA (62 aa)) is disordered. Low complexity predominate over residues 749–779 (TSTSTETRSSSSESSHSSSSHSHGKTTPTKT). Phosphoserine; by autocatalysis is present on residues Ser-750, Ser-752, and Ser-758. Residues 780–802 (LQPSNPADSNNPETLFQFSDSVA) are compositionally biased toward polar residues. Ser-798 is subject to Phosphoserine.

It belongs to the protein kinase superfamily. AGC Ser/Thr protein kinase family. S6 kinase subfamily. In terms of assembly, forms a complex with either MAPK1/ERK2 or MAPK3/ERK1 in quiescent cells which transiently dissociates following mitogenic stimulation. Also associates with MAPK14/p38-alpha. Activated RPS6KA5 associates with and phosphorylates the NF-kappa-B p65 subunit RELA. Interacts with CREBBP and EP300. The cofactor is Mg(2+). Post-translationally, ser-376 and Thr-581 phosphorylation is required for kinase activity. Ser-376 and Ser-212 are autophosphorylated by the C-terminal kinase domain, and their phosphorylation is essential for the catalytic activity of the N-terminal kinase domain. Phosphorylated at Ser-360, Thr-581 and Thr-700 by MAPK1/ERK2, MAPK3/ERK1 and MAPK14/p38-alpha. Autophosphorylated at Ser-750, Ser-752 and Ser-758 by the N-terminal kinase domain. In terms of processing, ubiquitinated. Widely expressed with high levels in heart, brain and placenta. Less abundant in lung, kidney and liver.

The protein resides in the nucleus. It is found in the cytoplasm. It catalyses the reaction L-seryl-[protein] + ATP = O-phospho-L-seryl-[protein] + ADP + H(+). The catalysed reaction is L-threonyl-[protein] + ATP = O-phospho-L-threonyl-[protein] + ADP + H(+). Its activity is regulated as follows. Activated by phosphorylation at Ser-360, Thr-581 and Thr-700 by MAPK1/ERK2, MAPK3/ERK1 and MAPK14/p38-alpha, and by further autophosphorylation of Ser-212, Ser-376 and Ser-381 by the activated C-terminal kinase domain. The active N-terminal kinase domain finally phosphorylates downstream substrates, as well as Ser-750, Ser-752 and Ser-758 in its own C-terminal region. In terms of biological role, serine/threonine-protein kinase that is required for the mitogen or stress-induced phosphorylation of the transcription factors CREB1 and ATF1 and for the regulation of the transcription factors RELA, STAT3 and ETV1/ER81, and that contributes to gene activation by histone phosphorylation and functions in the regulation of inflammatory genes. Phosphorylates CREB1 and ATF1 in response to mitogenic or stress stimuli such as UV-C irradiation, epidermal growth factor (EGF) and anisomycin. Plays an essential role in the control of RELA transcriptional activity in response to TNF and upon glucocorticoid, associates in the cytoplasm with the glucocorticoid receptor NR3C1 and contributes to RELA inhibition and repression of inflammatory gene expression. In skeletal myoblasts is required for phosphorylation of RELA at 'Ser-276' during oxidative stress. In erythropoietin-stimulated cells, is necessary for the 'Ser-727' phosphorylation of STAT3 and regulation of its transcriptional potential. Phosphorylates ETV1/ER81 at 'Ser-191' and 'Ser-216', and thereby regulates its ability to stimulate transcription, which may be important during development and breast tumor formation. Directly represses transcription via phosphorylation of 'Ser-1' of histone H2A. Phosphorylates 'Ser-10' of histone H3 in response to mitogenics, stress stimuli and EGF, which results in the transcriptional activation of several immediate early genes, including proto-oncogenes c-fos/FOS and c-jun/JUN. May also phosphorylate 'Ser-28' of histone H3. Mediates the mitogen- and stress-induced phosphorylation of high mobility group protein 1 (HMGN1/HMG14). In lipopolysaccharide-stimulated primary macrophages, acts downstream of the Toll-like receptor TLR4 to limit the production of pro-inflammatory cytokines. Functions probably by inducing transcription of the MAP kinase phosphatase DUSP1 and the anti-inflammatory cytokine interleukin 10 (IL10), via CREB1 and ATF1 transcription factors. Plays a role in neuronal cell death by mediating the downstream effects of excitotoxic injury. Phosphorylates TRIM7 at 'Ser-107' in response to growth factor signaling via the MEK/ERK pathway, thereby stimulating its ubiquitin ligase activity. This Homo sapiens (Human) protein is Ribosomal protein S6 kinase alpha-5 (RPS6KA5).